Here is a 264-residue protein sequence, read N- to C-terminus: Triosephosphate isomerase (264 aa).

Asn-13–Lys-15 is a binding site for substrate. Residue His-106 is the Electrophile of the active site. Catalysis depends on Glu-179, which acts as the Proton acceptor. Residues Gly-185, Ser-223, and Gly-244–Gly-245 each bind substrate.

It belongs to the triosephosphate isomerase family. In terms of assembly, homodimer.

It is found in the cytoplasm. It carries out the reaction D-glyceraldehyde 3-phosphate = dihydroxyacetone phosphate. It participates in carbohydrate biosynthesis; gluconeogenesis. It functions in the pathway carbohydrate degradation; glycolysis; D-glyceraldehyde 3-phosphate from glycerone phosphate: step 1/1. Involved in the gluconeogenesis. Catalyzes stereospecifically the conversion of dihydroxyacetone phosphate (DHAP) to D-glyceraldehyde-3-phosphate (G3P). The protein is Triosephosphate isomerase of Acinetobacter baumannii (strain AB0057).